We begin with the raw amino-acid sequence, 549 residues long: Pleckstrin homology domain-containing family A member 8 (549 aa).

Positions 1–93 constitute a PH domain; that stretch reads MEGVLYKWTN…WLVALGTAKA (93 aa). 2 disordered regions span residues 180–245 and 257–312; these read NPDL…ENIS and QNDL…QEVQ. Basic and acidic residues predominate over residues 203-219; it reads KSNDPKNLHPGETRKDL. Over residues 276 to 288 the composition is skewed to acidic residues; that stretch reads EPVEEQQTDGSTE. The span at 299-309 shows a compositional bias: polar residues; that stretch reads EVSMSPTQNKQ.

The protein resides in the cytoplasm. It is found in the golgi apparatus. Its subcellular location is the trans-Golgi network membrane. It localises to the membrane. Cargo transport protein that is required for apical transport from the trans-Golgi network (TGN) to the plasma membrane. The chain is Pleckstrin homology domain-containing family A member 8 (plekha8) from Danio rerio (Zebrafish).